We begin with the raw amino-acid sequence, 148 residues long: MTKQERQLKIKELISGQTVSSQYELLSELKSVGIEITQATLSRDCAELGIVRMYSGDSYKLSIPASGEKNVIKNLIGVEILSIQANEIFVIIKTLPGRASGVASFIDSFENPMIIGTLAGDDTVMVIPKTIKETKKVHQFIRNSISDN.

Belongs to the ArgR family.

The protein resides in the cytoplasm. Its pathway is amino-acid biosynthesis; L-arginine biosynthesis [regulation]. Regulates arginine biosynthesis genes. This is Arginine repressor from Chloroherpeton thalassium (strain ATCC 35110 / GB-78).